A 366-amino-acid polypeptide reads, in one-letter code: S-adenosylmethionine synthase 1 (366 aa).

Glu18 lines the K(+) pocket. 2 residues coordinate L-methionine: Glu31 and Gln74. ATP contacts are provided by residues 142–144 (DGN), 210–213 (SGRF), Asp221, 227–228 (RK), Ala244, Lys248, and Lys252. Residue Asp221 participates in L-methionine binding. Residue Lys252 participates in L-methionine binding.

This sequence belongs to the AdoMet synthase family. In terms of assembly, homotetramer. It depends on Mn(2+) as a cofactor. The cofactor is Mg(2+). Requires Co(2+) as cofactor. K(+) serves as cofactor.

It is found in the cytoplasm. It catalyses the reaction L-methionine + ATP + H2O = S-adenosyl-L-methionine + phosphate + diphosphate. Its pathway is amino-acid biosynthesis; S-adenosyl-L-methionine biosynthesis; S-adenosyl-L-methionine from L-methionine: step 1/1. Its function is as follows. Catalyzes the formation of S-adenosylmethionine from methionine and ATP. The reaction comprises two steps that are both catalyzed by the same enzyme: formation of S-adenosylmethionine (AdoMet) and triphosphate, and subsequent hydrolysis of the triphosphate. This Pisum sativum (Garden pea) protein is S-adenosylmethionine synthase 1 (SAMS1).